The sequence spans 227 residues: Ribosomal RNA large subunit methyltransferase E (227 aa).

S-adenosyl-L-methionine contacts are provided by Gly-78, Trp-80, Asp-103, Asp-119, and Asp-143. The active-site Proton acceptor is the Lys-183.

Belongs to the class I-like SAM-binding methyltransferase superfamily. RNA methyltransferase RlmE family.

The protein localises to the cytoplasm. The enzyme catalyses uridine(2552) in 23S rRNA + S-adenosyl-L-methionine = 2'-O-methyluridine(2552) in 23S rRNA + S-adenosyl-L-homocysteine + H(+). Specifically methylates the uridine in position 2552 of 23S rRNA at the 2'-O position of the ribose in the fully assembled 50S ribosomal subunit. This chain is Ribosomal RNA large subunit methyltransferase E, found in Rickettsia africae (strain ESF-5).